The sequence spans 620 residues: Bicaudal D-related protein homolog (620 aa).

The segment covering 23–41 has biased composition (low complexity); sequence NNNNNSIVGGSSSSSSGGN. The tract at residues 23-53 is disordered; sequence NNNNNSIVGGSSSSSSGGNKSKRPRQFGQYS. Coiled-coil stretches lie at residues 120-331 and 461-575; these read AAEL…LSER and VLEQ…LIDE. 2 stretches are compositionally biased toward basic and acidic residues: residues 493 to 503 and 509 to 528; these read KEERDQARGDL and RDEL…DRRT. Residues 493 to 528 are disordered; that stretch reads KEERDQARGDLEDNTDRDELLSKAQTERDAANDRRT.

This sequence belongs to the BICDR family. In terms of assembly, may homodimerize but does not interact with BicD. May interact with eEF1gamma; The interaction is probably indirect.

Functionally, functions redundantly with BicD. Involved in formation and/or development of mechanosensory organs during metamorphosis. During macrochaetae development, together with BicD, involved in Rab 6 and Spn-F stability and distribution and actin cytoskeleton organization. This chain is Bicaudal D-related protein homolog, found in Drosophila melanogaster (Fruit fly).